A 109-amino-acid chain; its full sequence is Ribonuclease (109 aa).

The active-site Proton acceptor is the Glu-72. The Proton donor role is filled by His-101.

The protein belongs to the ribonuclease N1/T1 family.

It is found in the secreted. Its function is as follows. Hydrolyzes phosphodiester bonds in RNA, poly- and oligoribonucleotides resulting in 3'-nucleoside monophosphates via 2',3'-cyclophosphate intermediates. In Heyndrickxia coagulans (Weizmannia coagulans), this protein is Ribonuclease.